Here is a 326-residue protein sequence, read N- to C-terminus: Lipoyl synthase (326 aa).

Residues cysteine 56, cysteine 61, cysteine 67, cysteine 82, cysteine 86, cysteine 89, and serine 298 each contribute to the [4Fe-4S] cluster site. Residues tryptophan 68 to serine 287 enclose the Radical SAM core domain.

Belongs to the radical SAM superfamily. Lipoyl synthase family. [4Fe-4S] cluster serves as cofactor.

It is found in the cytoplasm. The enzyme catalyses [[Fe-S] cluster scaffold protein carrying a second [4Fe-4S](2+) cluster] + N(6)-octanoyl-L-lysyl-[protein] + 2 oxidized [2Fe-2S]-[ferredoxin] + 2 S-adenosyl-L-methionine + 4 H(+) = [[Fe-S] cluster scaffold protein] + N(6)-[(R)-dihydrolipoyl]-L-lysyl-[protein] + 4 Fe(3+) + 2 hydrogen sulfide + 2 5'-deoxyadenosine + 2 L-methionine + 2 reduced [2Fe-2S]-[ferredoxin]. The protein operates within protein modification; protein lipoylation via endogenous pathway; protein N(6)-(lipoyl)lysine from octanoyl-[acyl-carrier-protein]: step 2/2. In terms of biological role, catalyzes the radical-mediated insertion of two sulfur atoms into the C-6 and C-8 positions of the octanoyl moiety bound to the lipoyl domains of lipoate-dependent enzymes, thereby converting the octanoylated domains into lipoylated derivatives. The sequence is that of Lipoyl synthase from Streptomyces griseus subsp. griseus (strain JCM 4626 / CBS 651.72 / NBRC 13350 / KCC S-0626 / ISP 5235).